Reading from the N-terminus, the 235-residue chain is Iron-sulfur cluster co-chaperone protein HscB (235 aa).

A divalent metal cation-binding residues include Cys41, Cys44, Cys58, and Cys61. Positions 72 to 144 constitute a J domain; that stretch reads DYFSLMDCNR…LSRGLYLLKL (73 aa).

Belongs to the HscB family. As to quaternary structure, interacts with ISCU and HSPA9 to form an iron-sulfur transfer complex. Interacts with SDHAF1 (via the first LYR motif); the interaction recruits the iron-sulfur transfer complex composed of HSC20, HSPA9 and ISCU and mediates the incorporation of iron-sulfur clusters into SDHB which also interacts with HSC20. Interacts with the cytoplasmic form of ISCU and with CIA complex member CIAO1 (via LYR motif). Homodimer. Interacts with ISCU (cytoplasmic form); this interaction stabilizes the (Fe-S) clusters on ISCU. Interacts with the CIA complex member CIAO1 (via LYR motif). In terms of tissue distribution, expressed in lung, brain, stomach, spleen, ovary, testis, liver, muscle and heart.

It is found in the cytoplasm. The protein resides in the mitochondrion. Its pathway is cofactor biosynthesis; iron-sulfur cluster biosynthesis. Acts as a co-chaperone in iron-sulfur cluster assembly in mitochondria. Required for incorporation of iron-sulfur clusters into SDHB, the iron-sulfur protein subunit of succinate dehydrogenase that is involved in complex II of the mitochondrial electron transport chain. Recruited to SDHB by interaction with SDHAF1 which first binds SDHB and then recruits the iron-sulfur transfer complex formed by HSC20, HSPA9 and ISCU through direct binding to HSC20. Plays an essential role in hematopoiesis. Functionally, acts as a co-chaperone in iron-sulfur cluster assembly in the cytoplasm. Also mediates complex formation between components of the cytosolic iron-sulfur biogenesis pathway and the CIA targeting complex composed of CIAO1, DIPK1B/FAM69B and MMS19 by binding directly to the scaffold protein ISCU and to CIAO1. This facilitates iron-sulfur cluster insertion into a number of cytoplasmic and nuclear proteins including POLD1, ELP3, DPYD and PPAT. The protein is Iron-sulfur cluster co-chaperone protein HscB of Homo sapiens (Human).